The following is a 118-amino-acid chain: Large ribosomal subunit protein bL20 (118 aa).

It belongs to the bacterial ribosomal protein bL20 family.

Binds directly to 23S ribosomal RNA and is necessary for the in vitro assembly process of the 50S ribosomal subunit. It is not involved in the protein synthesizing functions of that subunit. This is Large ribosomal subunit protein bL20 from Alteromonas mediterranea (strain DSM 17117 / CIP 110805 / LMG 28347 / Deep ecotype).